Reading from the N-terminus, the 453-residue chain is MNIVILAAGTGKRMRSALPKVLHPLAGRPLLSHVIATARTLQPSRLVVVVGHGAEQVQTAVAAPDVQFAVQAEQLGTGHAVRQALPLLDPAQPTLVLYGDVPLTRASTLRRLVDAAREGSYGILTVTLDDPTGYGRIVRDAAGFVTRIVEQKDASPEQLKIAEINTGIIVTPTGQLAMWLGALKNENAQGEYYLTDVVELAIEAGFDVVTSQPDDEWETLGVNSKAQLAELERIHQRTIADALLVDGVTLADPARVDVRGTLRCGRDVSIDVNCVFEGNVTLADNVTIGPNCVIRNASVGAGTRIDAFTHIDGAELGANTVIGPYARLRPGAQLADEAHVGNFVEVKNAVIGHGSKANHLTYIGDADIGARVNIGAGTITCNYDGANKFRTVIEDDVFVGSDTQLVAPVRVGRGVTIAAGTTIWKDVAEGVLALNEKTQTAKSGYVRPVKKKS.

Residues 1 to 225 (MNIVILAAGT…EWETLGVNSK (225 aa)) form a pyrophosphorylase region. UDP-N-acetyl-alpha-D-glucosamine-binding positions include 6–9 (LAAG), K20, Q71, 76–77 (GT), 98–100 (YGD), G135, E150, N165, and N223. D100 contributes to the Mg(2+) binding site. Residue N223 participates in Mg(2+) binding. The segment at 226-246 (AQLAELERIHQRTIADALLVD) is linker. The segment at 247 to 453 (GVTLADPARV…GYVRPVKKKS (207 aa)) is N-acetyltransferase. UDP-N-acetyl-alpha-D-glucosamine is bound by residues R329 and K347. Residue H359 is the Proton acceptor of the active site. Residues Y362 and N373 each coordinate UDP-N-acetyl-alpha-D-glucosamine. Acetyl-CoA contacts are provided by residues A376, 382–383 (NY), S401, and A419.

This sequence in the N-terminal section; belongs to the N-acetylglucosamine-1-phosphate uridyltransferase family. It in the C-terminal section; belongs to the transferase hexapeptide repeat family. Homotrimer. It depends on Mg(2+) as a cofactor.

The protein resides in the cytoplasm. It carries out the reaction alpha-D-glucosamine 1-phosphate + acetyl-CoA = N-acetyl-alpha-D-glucosamine 1-phosphate + CoA + H(+). It catalyses the reaction N-acetyl-alpha-D-glucosamine 1-phosphate + UTP + H(+) = UDP-N-acetyl-alpha-D-glucosamine + diphosphate. It functions in the pathway nucleotide-sugar biosynthesis; UDP-N-acetyl-alpha-D-glucosamine biosynthesis; N-acetyl-alpha-D-glucosamine 1-phosphate from alpha-D-glucosamine 6-phosphate (route II): step 2/2. Its pathway is nucleotide-sugar biosynthesis; UDP-N-acetyl-alpha-D-glucosamine biosynthesis; UDP-N-acetyl-alpha-D-glucosamine from N-acetyl-alpha-D-glucosamine 1-phosphate: step 1/1. The protein operates within bacterial outer membrane biogenesis; LPS lipid A biosynthesis. Its function is as follows. Catalyzes the last two sequential reactions in the de novo biosynthetic pathway for UDP-N-acetylglucosamine (UDP-GlcNAc). The C-terminal domain catalyzes the transfer of acetyl group from acetyl coenzyme A to glucosamine-1-phosphate (GlcN-1-P) to produce N-acetylglucosamine-1-phosphate (GlcNAc-1-P), which is converted into UDP-GlcNAc by the transfer of uridine 5-monophosphate (from uridine 5-triphosphate), a reaction catalyzed by the N-terminal domain. This is Bifunctional protein GlmU from Burkholderia ambifaria (strain MC40-6).